We begin with the raw amino-acid sequence, 880 residues long: MADYNDKNYLLHMSGPDSDTGPGIENEDPRAVENPGHDLAESEGGLAAAMQSIPDTLPILPVRDVVIFNYMILPLFIGREKSVQAVEAALKSGRHLLVCAQKEEATEDPGPEDIYQVGTVVQVMRMLKMPDSRVKILVQGVSRARVREFSQVEPFLEAHIETLPEATPKVDATVEALLRSVREQSEKVLSLRGLSSPDVLAVLQGVDDPGRLADLIAANMRMKTADAQQILETEDPLDRLMLVNTQLQREVEVATVQARIQSSAREGMDKAQKDYFLREQLKAIRSELGDKDDEGEEELESLRAALDKAGMPKDVRKEADKQLRRLAGMHADSSEANVVRTYLDWLAELPWKKLSRDRLDIAHAKQILDEDHCGLEKIKDRILEFLSVRKLNPQSKGPILCFAGPPGVGKTSLGRSVARALGRKFQRLSLGGMHDEAEIRGHRRTYIGAMPGRIIQSLKQAGTRNPVIVLDEVDKLGADFRGDPSSALLEVLDPEQNHTFSDHYLNVPFDLSKVMFLCTANHLETIPAPLRDRMEVITLPGYTMQEKAEIARKHLLPKKIKENGLQEKDVTLDDAALEKVIREYTREAGLRNLERELSSICRKLARRKAEGKKGPFRVSTADVEKLLGAPRFIEDEKEKKLMPGMALGLAWTPAGGEVLTVEATVMKGKGGLTLTGQLGDVMKESAQAALSYIRSRAEELGVDPSFVSEYDIHVHVPAGATPKDGPSAGVTLTTALISALNGHRVRADLCMTGEITLQGRVLPVGGIKEKILAGVARGLKHVVIPWQNTKDLEDVPKELLKRITVHPVHHYDELLPLVFEGKSGKGGVSGAGQAGDKGGKSKAAAGKKDVVAARPAKPAAPARRRKDKTEDELPTAEAGA.

The interval 1 to 37 is disordered; sequence MADYNDKNYLLHMSGPDSDTGPGIENEDPRAVENPGH. Positions 27–37 are enriched in basic and acidic residues; sequence EDPRAVENPGH. The Lon N-terminal domain maps to 57 to 251; it reads LPILPVRDVV…LVNTQLQREV (195 aa). 404–411 provides a ligand contact to ATP; sequence GPPGVGKT. The 182-residue stretch at 640–821 folds into the Lon proteolytic domain; the sequence is KLMPGMALGL…DELLPLVFEG (182 aa). Residues Ser727 and Lys770 contribute to the active site. Residues 826 to 836 show a composition bias toward gly residues; it reads GGVSGAGQAGD. Residues 826 to 880 form a disordered region; it reads GGVSGAGQAGDKGGKSKAAAGKKDVVAARPAKPAAPARRRKDKTEDELPTAEAGA. The segment covering 852–861 has biased composition (low complexity); the sequence is AARPAKPAAP.

The protein belongs to the peptidase S16 family. Homohexamer. Organized in a ring with a central cavity.

The protein resides in the cytoplasm. The enzyme catalyses Hydrolysis of proteins in presence of ATP.. ATP-dependent serine protease that mediates the selective degradation of mutant and abnormal proteins as well as certain short-lived regulatory proteins. Required for cellular homeostasis and for survival from DNA damage and developmental changes induced by stress. Degrades polypeptides processively to yield small peptide fragments that are 5 to 10 amino acids long. Binds to DNA in a double-stranded, site-specific manner. In Desulfovibrio desulfuricans (strain ATCC 27774 / DSM 6949 / MB), this protein is Lon protease.